Here is a 205-residue protein sequence, read N- to C-terminus: Methylthioribulose-1-phosphate dehydratase (205 aa).

2 residues coordinate Zn(2+): histidine 98 and histidine 100.

Belongs to the aldolase class II family. MtnB subfamily. Zn(2+) is required as a cofactor.

It carries out the reaction 5-(methylsulfanyl)-D-ribulose 1-phosphate = 5-methylsulfanyl-2,3-dioxopentyl phosphate + H2O. Its pathway is amino-acid biosynthesis; L-methionine biosynthesis via salvage pathway; L-methionine from S-methyl-5-thio-alpha-D-ribose 1-phosphate: step 2/6. Its function is as follows. Catalyzes the dehydration of methylthioribulose-1-phosphate (MTRu-1-P) into 2,3-diketo-5-methylthiopentyl-1-phosphate (DK-MTP-1-P). The protein is Methylthioribulose-1-phosphate dehydratase of Gluconacetobacter diazotrophicus (strain ATCC 49037 / DSM 5601 / CCUG 37298 / CIP 103539 / LMG 7603 / PAl5).